The sequence spans 152 residues: Large ribosomal subunit protein uL22 (152 aa).

The span at 124–143 (APTKAASKKAAPAKQTTPAA) shows a compositional bias: low complexity. The interval 124–152 (APTKAASKKAAPAKQTTPAATESKTEGAE) is disordered.

It belongs to the universal ribosomal protein uL22 family. Part of the 50S ribosomal subunit.

This protein binds specifically to 23S rRNA; its binding is stimulated by other ribosomal proteins, e.g. L4, L17, and L20. It is important during the early stages of 50S assembly. It makes multiple contacts with different domains of the 23S rRNA in the assembled 50S subunit and ribosome. Its function is as follows. The globular domain of the protein is located near the polypeptide exit tunnel on the outside of the subunit, while an extended beta-hairpin is found that lines the wall of the exit tunnel in the center of the 70S ribosome. This chain is Large ribosomal subunit protein uL22, found in Salinispora arenicola (strain CNS-205).